A 212-amino-acid polypeptide reads, in one-letter code: Agamous-like MADS-box protein MADS9 (212 aa).

Residues 1-61 (MGRGKIEIKR…GKMHEYCSPS (61 aa)) form the MADS-box domain. The region spanning 84-170 (HENLNNELDR…NYIVHHQGMP (87 aa)) is the K-box domain.

Expressed during flower development in stamens and petals.

The protein resides in the nucleus. In terms of biological role, probable transcription factor that may play role in specifying stamen and petal organ identity. This is Agamous-like MADS-box protein MADS9 from Vitis vinifera (Grape).